We begin with the raw amino-acid sequence, 213 residues long: Ribonuclease HII (213 aa).

An RNase H type-2 domain is found at 1–213 (MKIIGIDEAG…SWKTAQKFIQ (213 aa)). Positions 7, 8, and 105 each coordinate a divalent metal cation.

Belongs to the RNase HII family. Mn(2+) is required as a cofactor. It depends on Mg(2+) as a cofactor.

It is found in the cytoplasm. It catalyses the reaction Endonucleolytic cleavage to 5'-phosphomonoester.. In terms of biological role, endonuclease that specifically degrades the RNA of RNA-DNA hybrids. This is Ribonuclease HII from Methanococcoides burtonii (strain DSM 6242 / NBRC 107633 / OCM 468 / ACE-M).